Here is a 176-residue protein sequence, read N- to C-terminus: MNKDDDKEGMAMFSALIEGIKPIAQDKRHFRTPLKTKQEIELKEQQLHANSYFSDTYQPLLPVQGPMRWLDEGVDSLELKRLRRGDYQPDLLLDLHGYRQSEAKLELAALIQACVKQQSQCCCVMHGYGTGILKQQVPMWLVQHPMVKAFHQAPKEWGGDAALLVLIDIGDQPHRR.

Residues 93–168 enclose the Smr domain; the sequence is LDLHGYRQSE…GDAALLVLID (76 aa).

The protein belongs to the SmrB family. Associates with collided ribosomes, but not with correctly translating polysomes.

Acts as a ribosome collision sensor. Detects stalled/collided disomes (pairs of ribosomes where the leading ribosome is stalled and a second ribosome has collided with it) and endonucleolytically cleaves mRNA at the 5' boundary of the stalled ribosome. Stalled/collided disomes form a new interface (primarily via the 30S subunits) that binds SmrB. Cleaved mRNA becomes available for tmRNA ligation, leading to ribosomal subunit dissociation and rescue of stalled ribosomes. In Shewanella sp. (strain MR-4), this protein is Ribosome rescue factor SmrB.